We begin with the raw amino-acid sequence, 192 residues long: Actin, muscle (192 aa).

The protein belongs to the actin family.

It localises to the cytoplasm. The protein resides in the cytoskeleton. It carries out the reaction ATP + H2O = ADP + phosphate + H(+). Its function is as follows. Actins are highly conserved proteins that are involved in various types of cell motility and are ubiquitously expressed in all eukaryotic cells. This chain is Actin, muscle, found in Chionoecetes opilio (Atlantic snow crab).